The sequence spans 207 residues: Putative zinc finger protein 137 (207 aa).

The C2H2-type 1 zinc finger occupies 72-94 (CKCNDCHKVFSNATTIANHWRIH). The segment at 100–122 (YKCNKCGKIFRHRSYLAVYQRTH) adopts a C2H2-type 2; degenerate zinc-finger fold. The segment at 128–150 (YKYHDCGKVFSQASSYAKHRRIH) adopts a C2H2-type 3; degenerate zinc-finger fold. 2 consecutive C2H2-type zinc fingers follow at residues 156–178 (HKCD…QRIH) and 184–206 (YKCL…QKIH).

This sequence belongs to the krueppel C2H2-type zinc-finger protein family.

It is found in the nucleus. May be involved in transcriptional regulation. In Homo sapiens (Human), this protein is Putative zinc finger protein 137 (ZNF137P).